We begin with the raw amino-acid sequence, 194 residues long: Protein ORF31 (194 aa).

Positions 1–25 (MKSVASPLCQFHGVFCLYQCRQCLA) are cleaved as a signal peptide.

It belongs to the herpesviridae UL92 family. Interacts with ORF34.

It is found in the host nucleus. The protein resides in the host cytoplasm. Its function is as follows. Plays an important role in the expression of late genes. May play a role in viral replication. This chain is Protein ORF31 (ORF31), found in Homo sapiens (Human).